Consider the following 249-residue polypeptide: Large ribosomal subunit protein uL30A (249 aa).

This sequence belongs to the universal ribosomal protein uL30 family. In terms of assembly, component of the small ribosomal subunit (SSU). Mature yeast ribosomes consist of a small (40S) and a large (60S) subunit. The 40S small subunit contains 1 molecule of ribosomal RNA (18S rRNA) and at least 33 different proteins. The large 60S subunit contains 3 rRNA molecules (25S, 5.8S and 5S rRNA) and at least 46 different proteins.

The protein localises to the cytoplasm. It localises to the nucleus. Its subcellular location is the nucleolus. In terms of biological role, component of the ribosome, a large ribonucleoprotein complex responsible for the synthesis of proteins in the cell. The small ribosomal subunit (SSU) binds messenger RNAs (mRNAs) and translates the encoded message by selecting cognate aminoacyl-transfer RNA (tRNA) molecules. The large subunit (LSU) contains the ribosomal catalytic site termed the peptidyl transferase center (PTC), which catalyzes the formation of peptide bonds, thereby polymerizing the amino acids delivered by tRNAs into a polypeptide chain. The nascent polypeptides leave the ribosome through a tunnel in the LSU and interact with protein factors that function in enzymatic processing, targeting, and the membrane insertion of nascent chains at the exit of the ribosomal tunnel. In Schizosaccharomyces pombe (strain 972 / ATCC 24843) (Fission yeast), this protein is Large ribosomal subunit protein uL30A (rlp7).